Consider the following 531-residue polypeptide: Ultra-long-chain fatty acid omega-hydroxylase (531 aa).

Over M1–Y22 the chain is Lumenal. The helical transmembrane segment at A23–L43 threads the bilayer. At R44–A531 the chain is on the cytoplasmic side. Heme-binding residues include E335 and C475.

This sequence belongs to the cytochrome P450 family. Requires heme as cofactor.

It localises to the endoplasmic reticulum membrane. It is found in the microsome membrane. It carries out the reaction triacontanoate + reduced [NADPH--hemoprotein reductase] + O2 = omega-hydroxy-triacontanoate + oxidized [NADPH--hemoprotein reductase] + H2O + H(+). The enzyme catalyses an omega-methyl-ultra-long-chain fatty acid + reduced [NADPH--hemoprotein reductase] + O2 = an omega-hydroxy-ultra-long-chain fatty acid + oxidized [NADPH--hemoprotein reductase] + H2O + H(+). In terms of biological role, a cytochrome P450 monooxygenase involved in epidermal ceramide biosynthesis. Hydroxylates the terminal carbon (omega-hydroxylation) of ultra-long-chain fatty acyls (C28-C36) prior to ceramide synthesis. Contributes to the synthesis of three classes of omega-hydroxy-ultra-long chain fatty acylceramides having sphingosine, 6-hydroxysphingosine and phytosphingosine bases, all major lipid components that underlie the permeability barrier of the stratum corneum. Mechanistically, uses molecular oxygen inserting one oxygen atom into a substrate, and reducing the second into a water molecule, with two electrons provided by NADPH via cytochrome P450 reductase (CPR; NADPH-ferrihemoprotein reductase). This is Ultra-long-chain fatty acid omega-hydroxylase from Homo sapiens (Human).